Reading from the N-terminus, the 450-residue chain is MSTHVTFDYSKALSFIGEHEITYLRDAVKVTHHAIHEKTGAGNDFLGWVDLPLQYDKEEFARIQKCAEKIKNDSDILLVVGIGGSYLGARAAIEMLNHSFYNTLSKEQRKTPQVLFVGQNISSTYMKDLMDVLEGKDFSINVISKSGTTTEPALAFRIFRKLLEEKYGKEEARKRIYATTDKARGALKTLADNEGYETFVIPDDVGGRFSVLTPVGLLPIAVSGLNIEEMMKGAAAGRDDFGTSELEENPAYQYAVVRNALYNKGKTIEMLINYEPALQYFAEWWKQLFGESEGKDQKGIFPSSANFSTDLHSLGQYVQEGRRDLFETVLKVGKSTHELTIESEENDLDGLNYLAGETVDFVNTKAYEGTLLAHSDGGVPNLIVNIPELNEYTFGYLVYFFEKACAMSGYLLGVNPFDQPGVEAYKKNMFALLGKPGFEELKAELEERLK.

Thr-39 carries the phosphothreonine modification. Catalysis depends on Glu-291, which acts as the Proton donor. Residues His-312 and Lys-426 contribute to the active site.

Belongs to the GPI family.

It localises to the cytoplasm. The catalysed reaction is alpha-D-glucose 6-phosphate = beta-D-fructose 6-phosphate. It functions in the pathway carbohydrate biosynthesis; gluconeogenesis. Its pathway is carbohydrate degradation; glycolysis; D-glyceraldehyde 3-phosphate and glycerone phosphate from D-glucose: step 2/4. Catalyzes the reversible isomerization of glucose-6-phosphate to fructose-6-phosphate. This chain is Glucose-6-phosphate isomerase, found in Bacillus anthracis.